Here is a 53-residue protein sequence, read N- to C-terminus: Small, acid-soluble spore protein K (53 aa).

The segment at 1 to 53 is disordered; the sequence is MRNKAHNFPNQNNNKLEGEPRAKAEYASKRADGTTNTHPQERMRASGERSDFF. Basic and acidic residues-rich tracts occupy residues 16-32 and 39-53; these read LEGEPRAKAEYASKRAD and PQERMRASGERSDFF.

The protein belongs to the SspK family.

It is found in the spore core. This Geobacillus kaustophilus (strain HTA426) protein is Small, acid-soluble spore protein K.